The following is a 108-amino-acid chain: NADH dehydrogenase [ubiquinone] flavoprotein 3, mitochondrial (108 aa).

The N-terminal 34 residues, 1-34 (MAASCLLRQGRAGALKTMLQEAQVFRGLASTVSL), are a transit peptide targeting the mitochondrion. Residues 33–72 (SLSAESGKSEKGQPQNSKKQSPPKKPAPVPAEPFDNSTYK) are disordered. Ser-105 carries the phosphoserine modification.

It belongs to the complex I NDUFV3 subunit family. In terms of assembly, complex I is composed of 45 different subunits. This is a component of the flavoprotein-sulfur (FP) fragment of the enzyme.

Its subcellular location is the mitochondrion inner membrane. Functionally, accessory subunit of the mitochondrial membrane respiratory chain NADH dehydrogenase (Complex I), that is believed not to be involved in catalysis. Complex I functions in the transfer of electrons from NADH to the respiratory chain. The immediate electron acceptor for the enzyme is believed to be ubiquinone. May be the terminally assembled subunit of Complex I. The polypeptide is NADH dehydrogenase [ubiquinone] flavoprotein 3, mitochondrial (NDUFV3) (Gorilla gorilla gorilla (Western lowland gorilla)).